The chain runs to 167 residues: Large ribosomal subunit protein uL10 (167 aa).

The protein belongs to the universal ribosomal protein uL10 family. In terms of assembly, part of the ribosomal stalk of the 50S ribosomal subunit. The N-terminus interacts with L11 and the large rRNA to form the base of the stalk. The C-terminus forms an elongated spine to which L12 dimers bind in a sequential fashion forming a multimeric L10(L12)X complex.

In terms of biological role, forms part of the ribosomal stalk, playing a central role in the interaction of the ribosome with GTP-bound translation factors. In Yersinia enterocolitica serotype O:8 / biotype 1B (strain NCTC 13174 / 8081), this protein is Large ribosomal subunit protein uL10.